The following is a 188-amino-acid chain: MIKGETIKNNSVKIVVATGIGAALFVIIGWLINIPTPIPNTSIQLQYAVLALFSALFGPLAGFLIGFIGHALKDSFLYGAPWWTWVLGSGLMGLFLGFGVKRESLTQGIFGNKEIIRFNIVQFLANVVVWGLIAPIGDILVYSEPANKVFTQGVVAGLVNALTIAVAGTLLLKLYAATRTKSGTLDKE.

The next 5 membrane-spanning stretches (helical) occupy residues Ile14–Ile34, Ala48–Ile68, Ala80–Val100, Ile120–Leu140, and Gln152–Leu172.

Belongs to the UPF0397 family.

It localises to the cell membrane. This chain is UPF0397 protein LACR_0367, found in Lactococcus lactis subsp. cremoris (strain SK11).